We begin with the raw amino-acid sequence, 2376 residues long: Serine/threonine-protein kinase WNK1 (2376 aa).

2 disordered regions span residues 1 to 78 and 93 to 201; these read MSGG…EHRF and ELPG…QQDD. Low complexity-rich tracts occupy residues 10 to 19 and 40 to 49; these read SSPPGSLFLS and GAAAADAGAG. Ser-15 and Ser-19 each carry phosphoserine. Basic and acidic residues predominate over residues 50 to 66; sequence RTEEYRRRRHTMDKDSR. Phosphothreonine is present on Thr-60. A compositionally biased stretch (low complexity) spans 125 to 158; that stretch reads TPAVAHVAQQPPAAATPGEPAAAVPAAASAPGSA. The residue at position 172 (Ser-172) is a Phosphoserine. One can recognise a Protein kinase domain in the interval 219–477; it reads LKFDIEIGRG…IKDLLNHAFF (259 aa). Ser-229 serves as a coordination point for ATP. Residues Phe-281 and Leu-297 each coordinate chloride. Residues 299–302 and Lys-349 each bind ATP; that span reads TELM. The active-site Proton acceptor is Asp-366. Chloride-binding residues include Leu-367 and Leu-369. Phosphoserine; by autocatalysis occurs at positions 376 and 380. An autoinhibitory domain region spans residues 486–553; sequence ELAEEDDGEK…VCEGDHKTMA (68 aa). A compositionally biased stretch (basic and acidic residues) spans 571–586; that stretch reads QLVREEQEKRKQEESS. Disordered stretches follow at residues 571–641, 701–799, and 1026–1118; these read QLVR…QLQY, AQPH…PVPT, and TTSS…SRPK. Composition is skewed to low complexity over residues 587-601 and 614-624; these read LKQQ…SQAG and AAATTSASVST. Positions 627 to 637 are interaction with KLHL3; that stretch reads EPEEPEADQHQ. Positions 708–752 are enriched in low complexity; sequence PPSSMAQGQSQGQPSSSSLTGIPSSQPVQHSQQQQGVQQTAPSQQ. The segment covering 753–766 has biased composition (polar residues); that stretch reads TVQYSLPQTSAPSE. The segment covering 1045–1057 has biased composition (pro residues); sequence PPEPVPAAPPQPT. Polar residues predominate over residues 1079-1089; the sequence is SDGNENVPSSS. Residues 1097 to 1118 are compositionally biased toward basic residues; that stretch reads IKRHYRKSVRSRSRHEKTSRPK. Residues 1257–1260 carry the RFXV motif 1 motif; it reads RFIV. Position 1261 is a phosphoserine (Ser-1261). Disordered stretches follow at residues 1459 to 1478 and 1734 to 1770; these read STAA…VSGS and STIP…PPSE. A compositionally biased stretch (pro residues) spans 1746-1756; sequence SKPPSTKPPVL. Residues 1853 to 1856 carry the RFXV motif 2 motif; that stretch reads RFQV. Residues 1862-1878 are compositionally biased toward basic and acidic residues; the sequence is DTQKEGKNKSEDVKSVH. Residues 1862–1942 are disordered; it reads DTQKEGKNKS…QPTKVGRFQV (81 aa). Low complexity predominate over residues 1881–1899; it reads SSTSESSVLSSSSPESTLV. Short sequence motifs (RFXV motif) lie at residues 1939-1942 and 1951-1954; these read RFQV and RFSV. Ser-1972, Ser-1996, Ser-2005, Ser-2006, Ser-2021, Ser-2023, and Ser-2026 each carry phosphoserine. Disordered stretches follow at residues 1991 to 2033 and 2110 to 2239; these read EKPE…LCSK and AAAP…RKGT. Over residues 2116 to 2128 the composition is skewed to basic residues; it reads GRRRRPTKSKGSK. A compositionally biased stretch (low complexity) spans 2129 to 2141; it reads SSRSSSLGNKSPG. Composition is skewed to polar residues over residues 2146–2161 and 2169–2193; these read LSGQ…QQTL and ETGQ…SAFT. Positions 2207–2223 are enriched in low complexity; the sequence is GQGTSSTNTVGGTVSSQ. Residues 2224-2238 show a composition bias toward polar residues; the sequence is AAQAQPPTMTSSRKG. The tract at residues 2235–2255 is amphipathic alpha-helix; sequence SRKGTFTDDLHKLVDNWARDA. Ser-2264, Ser-2280, Ser-2364, and Ser-2366 each carry phosphoserine.

The protein belongs to the protein kinase superfamily. Ser/Thr protein kinase family. WNK subfamily. Interacts with WNK3. Interacts with WNK4; inhibiting the activity of WNK4. Interacts with SGK1; promoting its activation. Associates with the mTORC2 complex. Interacts with UVRAG. Interacts (via amphipathic alpha-helix region) with EMC2; promoting the ER membrane protein complex assembly. Mg(2+) serves as cofactor. Post-translationally, autophosphorylated at Ser-376 and Ser-380, promoting its activity. Autophosphorylation at Ser-380 is inhibited by intracellular calcium. Phosphorylation at Thr-60 increases ability to activate SGK1. In terms of processing, ubiquitinated by the BCR(KLHL3) complex, leading to its degradation. Also ubiquitinated by the BCR(KLHL2) complex.

It localises to the cytoplasm. It is found in the nucleus. Its subcellular location is the cytoskeleton. The protein resides in the spindle. It catalyses the reaction L-seryl-[protein] + ATP = O-phospho-L-seryl-[protein] + ADP + H(+). The catalysed reaction is L-threonyl-[protein] + ATP = O-phospho-L-threonyl-[protein] + ADP + H(+). With respect to regulation, activated in response to hyperosmotic stress: cell shrinkage promotes formation of a membraneless compartment that concentrates WNK1 with its substrates, OXSR1/OSR1 and STK39/SPAK. Activation requires autophosphorylation of Ser-380 and, to a lower extent, Ser-376. Autophosphorylation and subsequent activation is inhibited by increases in intracellular ionic strength: Cl(-) potently inhibits WNK1 kinase activity via direct binding. Also inhibited by K(+) ions. In terms of biological role, serine/threonine-protein kinase component of the WNK1-SPAK/OSR1 kinase cascade, which acts as a key regulator of blood pressure and regulatory volume increase by promoting ion influx. WNK1 mediates regulatory volume increase in response to hyperosmotic stress by acting as a molecular crowding sensor, which senses cell shrinkage and mediates formation of a membraneless compartment by undergoing liquid-liquid phase separation. The membraneless compartment concentrates WNK1 with its substrates, OXSR1/OSR1 and STK39/SPAK, promoting WNK1-dependent phosphorylation and activation of downstream kinases OXSR1/OSR1 and STK39/SPAK. Following activation, OXSR1/OSR1 and STK39/SPAK catalyze phosphorylation of ion cotransporters SLC12A1/NKCC2, SLC12A2/NKCC1, SLC12A5/KCC2 and SLC12A6/KCC3, regulating their activity. Phosphorylation of Na-K-Cl cotransporters SLC12A2/NKCC1 and SLC12A2/NKCC1 promote their activation and ion influx; simultaneously, phosphorylation of K-Cl cotransporters SLC12A5/KCC2 and SLC12A6/KCC3 inhibit their activity, blocking ion efflux. Also acts as a regulator of angiogenesis in endothelial cells via activation of OXSR1/OSR1 and STK39/SPAK: activation of OXSR1/OSR1 regulates chemotaxis and invasion, while STK39/SPAK regulates endothelial cell proliferation. Also acts independently of the WNK1-SPAK/OSR1 kinase cascade by catalyzing phosphorylation of other substrates, such as SYT2, PCF11 and NEDD4L. Mediates phosphorylation of SYT2, regulating SYT2 association with phospholipids and membrane-binding. Regulates mRNA export in the nucleus by mediating phosphorylation of PCF11, thereby decreasing the association between PCF11 and POLR2A/RNA polymerase II and promoting mRNA export to the cytoplasm. Acts as a negative regulator of autophagy. Required for the abscission step during mitosis, independently of the WNK1-SPAK/OSR1 kinase cascade. May also play a role in actin cytoskeletal reorganization. Also acts as a scaffold protein independently of its protein kinase activity: negatively regulates cell membrane localization of various transporters and channels, such as SLC4A4, SLC26A6, SLC26A9, TRPV4 and CFTR. Involved in the regulation of epithelial Na(+) channel (ENaC) by promoting activation of SGK1 in a kinase-independent manner: probably acts as a scaffold protein that promotes the recruitment of SGK1 to the mTORC2 complex in response to chloride, leading to mTORC2-dependent phosphorylation and activation of SGK1. Acts as an assembly factor for the ER membrane protein complex independently of its protein kinase activity: associates with EMC2 in the cytoplasm via its amphipathic alpha-helix, and prevents EMC2 ubiquitination and subsequent degradation, thereby promoting EMC2 stabilization. This chain is Serine/threonine-protein kinase WNK1, found in Sus scrofa (Pig).